A 293-amino-acid polypeptide reads, in one-letter code: Ribosomal RNA small subunit methyltransferase A (293 aa).

Asn-29, Leu-31, Gly-56, Glu-77, Asp-102, and Asn-127 together coordinate S-adenosyl-L-methionine.

Belongs to the class I-like SAM-binding methyltransferase superfamily. rRNA adenine N(6)-methyltransferase family. RsmA subfamily.

Its subcellular location is the cytoplasm. The catalysed reaction is adenosine(1518)/adenosine(1519) in 16S rRNA + 4 S-adenosyl-L-methionine = N(6)-dimethyladenosine(1518)/N(6)-dimethyladenosine(1519) in 16S rRNA + 4 S-adenosyl-L-homocysteine + 4 H(+). In terms of biological role, specifically dimethylates two adjacent adenosines (A1518 and A1519) in the loop of a conserved hairpin near the 3'-end of 16S rRNA in the 30S particle. May play a critical role in biogenesis of 30S subunits. The polypeptide is Ribosomal RNA small subunit methyltransferase A (Geobacillus thermodenitrificans (strain NG80-2)).